The following is a 220-amino-acid chain: Ribose-5-phosphate isomerase A (220 aa).

Substrate is bound by residues 28–31, 81–84, and 94–97; these read TGST, DGAD, and KGGG. The Proton acceptor role is filled by Glu-103. Lys-121 is a binding site for substrate.

This sequence belongs to the ribose 5-phosphate isomerase family. As to quaternary structure, homodimer.

The enzyme catalyses aldehydo-D-ribose 5-phosphate = D-ribulose 5-phosphate. It participates in carbohydrate degradation; pentose phosphate pathway; D-ribose 5-phosphate from D-ribulose 5-phosphate (non-oxidative stage): step 1/1. Functionally, catalyzes the reversible conversion of ribose-5-phosphate to ribulose 5-phosphate. The sequence is that of Ribose-5-phosphate isomerase A from Shewanella sp. (strain W3-18-1).